Here is a 75-residue protein sequence, read N- to C-terminus: Large ribosomal subunit protein eL14 (75 aa).

Belongs to the eukaryotic ribosomal protein eL14 family.

The polypeptide is Large ribosomal subunit protein eL14 (Methanothermobacter thermautotrophicus (strain ATCC 29096 / DSM 1053 / JCM 10044 / NBRC 100330 / Delta H) (Methanobacterium thermoautotrophicum)).